The sequence spans 584 residues: Arginine--tRNA ligase (584 aa).

The 'HIGH' region signature appears at 130–140 (PNVAKEMHVGH).

Belongs to the class-I aminoacyl-tRNA synthetase family. As to quaternary structure, monomer.

The protein localises to the cytoplasm. The enzyme catalyses tRNA(Arg) + L-arginine + ATP = L-arginyl-tRNA(Arg) + AMP + diphosphate. This is Arginine--tRNA ligase from Protochlamydia amoebophila (strain UWE25).